A 454-amino-acid polypeptide reads, in one-letter code: UDP-N-acetylmuramate--L-alanine ligase (454 aa).

109–115 (GTHGKTT) contributes to the ATP binding site.

The protein belongs to the MurCDEF family.

The protein localises to the cytoplasm. It catalyses the reaction UDP-N-acetyl-alpha-D-muramate + L-alanine + ATP = UDP-N-acetyl-alpha-D-muramoyl-L-alanine + ADP + phosphate + H(+). The protein operates within cell wall biogenesis; peptidoglycan biosynthesis. Cell wall formation. In Protochlamydia amoebophila (strain UWE25), this protein is UDP-N-acetylmuramate--L-alanine ligase.